Reading from the N-terminus, the 277-residue chain is Putative pyruvate, phosphate dikinase regulatory protein (277 aa).

151 to 158 (GISRTSKT) contacts ADP.

Belongs to the pyruvate, phosphate/water dikinase regulatory protein family. PDRP subfamily.

It carries out the reaction N(tele)-phospho-L-histidyl/L-threonyl-[pyruvate, phosphate dikinase] + ADP = N(tele)-phospho-L-histidyl/O-phospho-L-threonyl-[pyruvate, phosphate dikinase] + AMP + H(+). The enzyme catalyses N(tele)-phospho-L-histidyl/O-phospho-L-threonyl-[pyruvate, phosphate dikinase] + phosphate + H(+) = N(tele)-phospho-L-histidyl/L-threonyl-[pyruvate, phosphate dikinase] + diphosphate. Its function is as follows. Bifunctional serine/threonine kinase and phosphorylase involved in the regulation of the pyruvate, phosphate dikinase (PPDK) by catalyzing its phosphorylation/dephosphorylation. The chain is Putative pyruvate, phosphate dikinase regulatory protein from Alkaliphilus oremlandii (strain OhILAs) (Clostridium oremlandii (strain OhILAs)).